Here is a 248-residue protein sequence, read N- to C-terminus: 5'-nucleotidase SurE (248 aa).

Positions 8, 9, 39, and 91 each coordinate a divalent metal cation.

The protein belongs to the SurE nucleotidase family. A divalent metal cation is required as a cofactor.

Its subcellular location is the cytoplasm. It catalyses the reaction a ribonucleoside 5'-phosphate + H2O = a ribonucleoside + phosphate. Nucleotidase that shows phosphatase activity on nucleoside 5'-monophosphates. The protein is 5'-nucleotidase SurE of Neisseria meningitidis serogroup C / serotype 2a (strain ATCC 700532 / DSM 15464 / FAM18).